Consider the following 111-residue polypeptide: Large ribosomal subunit protein P2 (111 aa).

The span at Ala63–Ala84 shows a compositional bias: low complexity. The interval Ala63 to Asp111 is disordered. Positions Glu85–Glu97 are enriched in basic and acidic residues. The residue at position 98 (Ser98) is a Phosphoserine.

As to quaternary structure, part of the ribosomal stalk of the large ribosomal subunit; P1 and P2 exist as dimers which assemble on the P0 scaffold.

In terms of biological role, plays an important role in the elongation step of protein synthesis. This Artemia salina (Brine shrimp) protein is Large ribosomal subunit protein P2.